Here is a 145-residue protein sequence, read N- to C-terminus: Basic phospholipase A2 cL037 (145 aa).

Residues Met1–Ala21 form the signal peptide. The propeptide occupies Ile22–Leu27. 7 cysteine pairs are disulfide-bonded: Cys38-Cys98, Cys54-Cys144, Cys56-Cys72, Cys71-Cys125, Cys78-Cys118, Cys87-Cys111, and Cys105-Cys116. Ca(2+)-binding residues include Tyr55, Gly57, and Gly59. Residue His75 is part of the active site. Residue Asp76 participates in Ca(2+) binding. Asp119 is an active-site residue.

This sequence belongs to the phospholipase A2 family. Group I subfamily. D49 sub-subfamily. It depends on Ca(2+) as a cofactor. As to expression, expressed by the venom gland.

Its subcellular location is the secreted. It catalyses the reaction a 1,2-diacyl-sn-glycero-3-phosphocholine + H2O = a 1-acyl-sn-glycero-3-phosphocholine + a fatty acid + H(+). Its function is as follows. PLA2 catalyzes the calcium-dependent hydrolysis of the 2-acyl groups in 3-sn-phosphoglycerides. In Laticauda semifasciata (Black-banded sea krait), this protein is Basic phospholipase A2 cL037.